Reading from the N-terminus, the 384-residue chain is DNA repair protein RAD51 homolog 2 (384 aa).

The segment at 1-75 is interaction with RAD51C; the sequence is MGSKKLKRVG…TAYGIKAQRS (75 aa). 108-115 lines the ATP pocket; that stretch reads GPPGCGKT.

The protein belongs to the RecA family. RAD51 subfamily. As to quaternary structure, part of the BCDX2 complex consisting of RAD51B, RAD51C, RAD51D and XRCC2; the complex has a ring-like structure arranged into a flat disc around a central channel. The BCDX2 subcomplex RAD51B:RAD51C interacts with RAD51. Interacts with SWSAP1; involved in homologous recombination repair. Interacts with HELQ. Post-translationally, phosphorylated on tyrosine residues by BCR-ABL. Expressed in a wide range of tissues.

It localises to the nucleus. Functionally, involved in the homologous recombination repair (HRR) pathway of double-stranded DNA breaks arising during DNA replication or induced by DNA-damaging agents. May promote the assembly of presynaptic RAD51 nucleoprotein filaments. Binds single-stranded DNA and double-stranded DNA and has DNA-dependent ATPase activity. Part of the RAD51 paralog protein complex BCDX2 which acts in the BRCA1-BRCA2-dependent HR pathway. Upon DNA damage, BCDX2 acts downstream of BRCA2 recruitment and upstream of RAD51 recruitment. BCDX2 binds predominantly to the intersection of the four duplex arms of the Holliday junction and to junction of replication forks. The BCDX2 complex was originally reported to bind single-stranded DNA, single-stranded gaps in duplex DNA and specifically to nicks in duplex DNA. The BCDX2 subcomplex RAD51B:RAD51C exhibits single-stranded DNA-dependent ATPase activity suggesting an involvement in early stages of the HR pathway. This chain is DNA repair protein RAD51 homolog 2 (RAD51B), found in Homo sapiens (Human).